The following is a 216-amino-acid chain: Cell envelope integrity protein Cei (216 aa).

The chain crosses the membrane as a helical span at residues 25-45 (PAIVVVAFLVVVTCVMWTLAL).

The protein resides in the cell membrane. In terms of biological role, contributes to cell envelope integrity and virulence. This is Cell envelope integrity protein Cei from Mycobacterium tuberculosis (strain ATCC 25618 / H37Rv).